An 80-amino-acid polypeptide reads, in one-letter code: Putative membrane protein insertion efficiency factor (80 aa).

Belongs to the UPF0161 family.

Its subcellular location is the cell inner membrane. In terms of biological role, could be involved in insertion of integral membrane proteins into the membrane. This chain is Putative membrane protein insertion efficiency factor, found in Paracoccus denitrificans (strain Pd 1222).